The following is a 156-amino-acid chain: Small ribosomal subunit protein uS7 (156 aa).

Belongs to the universal ribosomal protein uS7 family. In terms of assembly, part of the 30S ribosomal subunit. Contacts proteins S9 and S11.

In terms of biological role, one of the primary rRNA binding proteins, it binds directly to 16S rRNA where it nucleates assembly of the head domain of the 30S subunit. Is located at the subunit interface close to the decoding center, probably blocks exit of the E-site tRNA. The chain is Small ribosomal subunit protein uS7 from Dinoroseobacter shibae (strain DSM 16493 / NCIMB 14021 / DFL 12).